The primary structure comprises 121 residues: Flagellar protein FliT (121 aa).

The required for homodimerization stretch occupies residues 1–50 (MNNAPHLYFAWQQLVEKSQLMLRLATEEQWDELITSEMAYVNAVQEIAHL). The fliD binding stretch occupies residues 60–98 (MQEQLRPMLRLILDNESKVKQLLQIRMDELAKLVGQSSV).

The protein belongs to the FliT family. As to quaternary structure, homodimer. Interacts with FliD and FlhC.

It localises to the cytoplasm. Its subcellular location is the cytosol. Functionally, dual-function protein that regulates the transcription of class 2 flagellar operons and that also acts as an export chaperone for the filament-capping protein FliD. As a transcriptional regulator, acts as an anti-FlhDC factor; it directly binds FlhC, thus inhibiting the binding of the FlhC/FlhD complex to class 2 promoters, resulting in decreased expression of class 2 flagellar operons. As a chaperone, effects FliD transition to the membrane by preventing its premature polymerization, and by directing it to the export apparatus. The sequence is that of Flagellar protein FliT from Escherichia coli (strain 55989 / EAEC).